The sequence spans 248 residues: Probable transcriptional regulatory protein BRADO1143 (248 aa).

The protein belongs to the TACO1 family.

The protein resides in the cytoplasm. This chain is Probable transcriptional regulatory protein BRADO1143, found in Bradyrhizobium sp. (strain ORS 278).